Here is a 359-residue protein sequence, read N- to C-terminus: Phospho-N-acetylmuramoyl-pentapeptide-transferase (359 aa).

The next 10 membrane-spanning stretches (helical) occupy residues 3–23, 55–75, 80–100, 117–137, 156–176, 187–207, 231–251, 255–275, 280–300, and 334–354; these read QIMI…PALI, VAIL…GLAF, ITAS…VGFL, TAKT…VLQF, IATV…VVSA, LDGL…LITF, LALI…WNAA, IFMG…LSVT, ILAV…VLQI, and FWLL…GEWL.

This sequence belongs to the glycosyltransferase 4 family. MraY subfamily. It depends on Mg(2+) as a cofactor.

Its subcellular location is the cell membrane. It catalyses the reaction UDP-N-acetyl-alpha-D-muramoyl-L-alanyl-gamma-D-glutamyl-meso-2,6-diaminopimeloyl-D-alanyl-D-alanine + di-trans,octa-cis-undecaprenyl phosphate = di-trans,octa-cis-undecaprenyl diphospho-N-acetyl-alpha-D-muramoyl-L-alanyl-D-glutamyl-meso-2,6-diaminopimeloyl-D-alanyl-D-alanine + UMP. It participates in cell wall biogenesis; peptidoglycan biosynthesis. In terms of biological role, catalyzes the initial step of the lipid cycle reactions in the biosynthesis of the cell wall peptidoglycan: transfers peptidoglycan precursor phospho-MurNAc-pentapeptide from UDP-MurNAc-pentapeptide onto the lipid carrier undecaprenyl phosphate, yielding undecaprenyl-pyrophosphoryl-MurNAc-pentapeptide, known as lipid I. The polypeptide is Phospho-N-acetylmuramoyl-pentapeptide-transferase (Mycobacterium ulcerans (strain Agy99)).